Here is a 254-residue protein sequence, read N- to C-terminus: Glycerol operon regulatory protein (254 aa).

The region spanning 5–67 is the HTH iclR-type domain; that stretch reads IQSLERAAAM…PASGRYQLGA (63 aa). Positions 27–46 form a DNA-binding region, H-T-H motif; the sequence is LSDIASTLGLAKGTAHGILR. In terms of domain architecture, IclR-ED spans 82–251; that stretch reads LRARALVWTD…AAAVSRDLGA (170 aa).

Functionally, may be an activator protein for the gylABX operon. The sequence is that of Glycerol operon regulatory protein (gylR) from Streptomyces griseus.